The chain runs to 312 residues: Pantothenate kinase (312 aa).

Gly-97–Ser-104 is an ATP binding site.

This sequence belongs to the prokaryotic pantothenate kinase family.

Its subcellular location is the cytoplasm. The catalysed reaction is (R)-pantothenate + ATP = (R)-4'-phosphopantothenate + ADP + H(+). Its pathway is cofactor biosynthesis; coenzyme A biosynthesis; CoA from (R)-pantothenate: step 1/5. The chain is Pantothenate kinase from Mycobacterium sp. (strain JLS).